The following is a 686-amino-acid chain: Phosphomethylpyrimidine synthase (686 aa).

Residues N235, M264, Y293, H329, 349–351 (SRG), 390–393 (DGMR), and E429 contribute to the substrate site. Residue H433 coordinates Zn(2+). Y456 serves as a coordination point for substrate. H497 is a binding site for Zn(2+). [4Fe-4S] cluster is bound by residues C577, C580, and C585. The tract at residues 659-686 (IDSSGINDNKNDQQDASVVRVPSLEIEG) is disordered.

Belongs to the ThiC family. Homodimer. The cofactor is [4Fe-4S] cluster.

The enzyme catalyses 5-amino-1-(5-phospho-beta-D-ribosyl)imidazole + S-adenosyl-L-methionine = 4-amino-2-methyl-5-(phosphooxymethyl)pyrimidine + CO + 5'-deoxyadenosine + formate + L-methionine + 3 H(+). Its pathway is cofactor biosynthesis; thiamine diphosphate biosynthesis. In terms of biological role, catalyzes the synthesis of the hydroxymethylpyrimidine phosphate (HMP-P) moiety of thiamine from aminoimidazole ribotide (AIR) in a radical S-adenosyl-L-methionine (SAM)-dependent reaction. This chain is Phosphomethylpyrimidine synthase, found in Shewanella denitrificans (strain OS217 / ATCC BAA-1090 / DSM 15013).